Here is an 804-residue protein sequence, read N- to C-terminus: Protein-lysine N-methyltransferase SMYD4 (804 aa).

An S-adenosyl-L-methionine-binding site is contributed by Arg112–Ala114. Residues Ser233–Gly574 enclose the SET domain. Residues Cys296, Cys299, Cys309, Cys312, Cys318, Cys322, His331, and Cys335 each coordinate Zn(2+). The MYND-type zinc-finger motif lies at Cys296–Cys335. S-adenosyl-L-methionine contacts are provided by residues Asn427, Asn539–His540, Tyr573, and Phe595.

Belongs to the class V-like SAM-binding methyltransferase superfamily. In terms of assembly, interacts (via MYND-type zinc finger) with HDAC1.

Its subcellular location is the nucleus. The protein localises to the cytoplasm. The catalysed reaction is L-lysyl-[protein] + S-adenosyl-L-methionine = N(6)-methyl-L-lysyl-[protein] + S-adenosyl-L-homocysteine + H(+). Its function is as follows. Protein-lysine N-methyltransferase. Monomethylates PRMT5, modulating its transcriptional activity. May also act as a histone methyltransferase. Plays a critical role in cardiac development. Acts as a key epigenetic regulator of gene expression during cardiac development via its dual activities as a methyltransferase and negative regulator of HDAC1. The chain is Protein-lysine N-methyltransferase SMYD4 from Homo sapiens (Human).